We begin with the raw amino-acid sequence, 545 residues long: Glucose-6-phosphate isomerase (545 aa).

Glu-351 acts as the Proton donor in catalysis. Catalysis depends on residues His-382 and Lys-510.

The protein belongs to the GPI family.

It localises to the cytoplasm. The catalysed reaction is alpha-D-glucose 6-phosphate = beta-D-fructose 6-phosphate. It participates in carbohydrate biosynthesis; gluconeogenesis. It functions in the pathway carbohydrate degradation; glycolysis; D-glyceraldehyde 3-phosphate and glycerone phosphate from D-glucose: step 2/4. Functionally, catalyzes the reversible isomerization of glucose-6-phosphate to fructose-6-phosphate. The chain is Glucose-6-phosphate isomerase from Helicobacter pylori (strain HPAG1).